The sequence spans 361 residues: Phospho-N-acetylmuramoyl-pentapeptide-transferase (361 aa).

10 helical membrane passes run 26 to 46 (AILGILTALLISLVIGPVMIR), 73 to 93 (TMGGALILVAIAISTLLWADL), 97 to 117 (YVWVVLLVTLLFGAIGWVDDY), 134 to 154 (YFWQSVIGATAAIVLYVTASM), 168 to 188 (VSLTLGPVLFILLTYFVIVGS), 200 to 220 (GLAIMPTVMVAGALAIFAYLS), 237 to 257 (TGELIIFCGALVGAGLGFLWF), 264 to 284 (VFMGDVGALALGAALGTVAVI), 289 to 309 (IVLFIMGGVFVMETISVILQV), and 340 to 360 (IVRFWVVTVVLVLIGLASLKI).

This sequence belongs to the glycosyltransferase 4 family. MraY subfamily. It depends on Mg(2+) as a cofactor.

Its subcellular location is the cell inner membrane. The catalysed reaction is UDP-N-acetyl-alpha-D-muramoyl-L-alanyl-gamma-D-glutamyl-meso-2,6-diaminopimeloyl-D-alanyl-D-alanine + di-trans,octa-cis-undecaprenyl phosphate = di-trans,octa-cis-undecaprenyl diphospho-N-acetyl-alpha-D-muramoyl-L-alanyl-D-glutamyl-meso-2,6-diaminopimeloyl-D-alanyl-D-alanine + UMP. It functions in the pathway cell wall biogenesis; peptidoglycan biosynthesis. Catalyzes the initial step of the lipid cycle reactions in the biosynthesis of the cell wall peptidoglycan: transfers peptidoglycan precursor phospho-MurNAc-pentapeptide from UDP-MurNAc-pentapeptide onto the lipid carrier undecaprenyl phosphate, yielding undecaprenyl-pyrophosphoryl-MurNAc-pentapeptide, known as lipid I. In Marinobacter nauticus (strain ATCC 700491 / DSM 11845 / VT8) (Marinobacter aquaeolei), this protein is Phospho-N-acetylmuramoyl-pentapeptide-transferase.